The following is a 323-amino-acid chain: Melanocortin receptor 3 (323 aa).

Topologically, residues 1-37 (MNSSCCLSSVSPMLPNLSEHPAAPPASNRSGSGFCEQ) are extracellular. 3 N-linked (GlcNAc...) asparagine glycosylation sites follow: N2, N16, and N28. Residues 38 to 63 (VFIKPEVFLALGIVSLMENILVILAV) form a helical membrane-spanning segment. Over 64 to 75 (VRNGNLHSPMYF) the chain is Cytoplasmic. Residues 76 to 100 (FLCSLAAADMLVSLSNSLETIMIAV) form a helical membrane-spanning segment. Residues 101 to 118 (INSDSLTLEDQFIQHMDN) are Extracellular-facing. Residues 119 to 140 (IFDSMICISLVASICNLLAIAI) traverse the membrane as a helical segment. At 141-160 (DRYVTIFYALRYHSIMTVRK) the chain is on the cytoplasmic side. A helical membrane pass occupies residues 161–181 (ALTLIGVIWVCCGICGVMFII). Topologically, residues 182-186 (YSESK) are extracellular. A helical membrane pass occupies residues 187–210 (MVIVCLITMFFAMVLLMGTLYIHM). At 211-245 (FLFARLHVQRIAVLPPAGVVAPQQHSCMKGAVTIT) the chain is on the cytoplasmic side. A helical membrane pass occupies residues 246 to 268 (ILLGVFIFCWAPFFLHLVLIITC). Over 269–277 (PTNPYCICY) the chain is Extracellular. Residues 278-301 (TAHFNTYLVLIMCNSVIDPLIYAF) traverse the membrane as a helical segment. Topologically, residues 302 to 323 (RSLELRNTFKEILCGCNSMNLG) are cytoplasmic. A lipid anchor (S-palmitoyl cysteine) is attached at C315.

The protein belongs to the G-protein coupled receptor 1 family. Brain.

The protein localises to the cell membrane. In terms of biological role, receptor for MSH (alpha, beta and gamma) and ACTH. This receptor is mediated by G proteins which activate adenylate cyclase. Required for expression of anticipatory patterns of activity and wakefulness during periods of limited nutrient availability and for the normal regulation of circadian clock activity in the brain. The protein is Melanocortin receptor 3 (Mc3r) of Mus musculus (Mouse).